Reading from the N-terminus, the 190-residue chain is MKKHVTEEQKTSAAPEAEQASPESSAAEAATPEERISRLEEQLAAKEAECRENWDRFVRERADLENFRKRSNREKEELLNYGTKSLLEEILPVVDNLERALSHANENGSTGLTEGVQMIHGLLLNAMKKFGVTPLETSGAPFDPSFHQAMTQIPTDEHPPNTVVEEFQKGYLLKERLLRPAMVSVATAPK.

Residues methionine 1–lysine 10 show a composition bias toward basic and acidic residues. The segment at methionine 1 to glutamine 42 is disordered. Low complexity predominate over residues serine 12–alanine 30. The segment covering proline 32–glutamine 42 has biased composition (basic and acidic residues).

Belongs to the GrpE family. In terms of assembly, homodimer.

It localises to the cytoplasm. Participates actively in the response to hyperosmotic and heat shock by preventing the aggregation of stress-denatured proteins, in association with DnaK and GrpE. It is the nucleotide exchange factor for DnaK and may function as a thermosensor. Unfolded proteins bind initially to DnaJ; upon interaction with the DnaJ-bound protein, DnaK hydrolyzes its bound ATP, resulting in the formation of a stable complex. GrpE releases ADP from DnaK; ATP binding to DnaK triggers the release of the substrate protein, thus completing the reaction cycle. Several rounds of ATP-dependent interactions between DnaJ, DnaK and GrpE are required for fully efficient folding. This chain is Protein GrpE, found in Pelobacter propionicus (strain DSM 2379 / NBRC 103807 / OttBd1).